A 50-amino-acid polypeptide reads, in one-letter code: Small ribosomal subunit protein uS14 (50 aa).

The Zn(2+) site is built by cysteine 15, cysteine 18, cysteine 33, and cysteine 36.

Belongs to the universal ribosomal protein uS14 family. Zinc-binding uS14 subfamily. As to quaternary structure, part of the 30S ribosomal subunit. The cofactor is Zn(2+).

In terms of biological role, binds 16S rRNA, required for the assembly of 30S particles. The polypeptide is Small ribosomal subunit protein uS14 (Methanosarcina barkeri (strain Fusaro / DSM 804)).